Here is a 231-residue protein sequence, read N- to C-terminus: 5'-methylthioadenosine/S-adenosylhomocysteine nucleosidase (231 aa).

E12 acts as the Proton acceptor in catalysis. Substrate contacts are provided by residues G78, I153, and 174–175 (ME). D198 acts as the Proton donor in catalysis.

This sequence belongs to the PNP/UDP phosphorylase family. MtnN subfamily.

The catalysed reaction is S-adenosyl-L-homocysteine + H2O = S-(5-deoxy-D-ribos-5-yl)-L-homocysteine + adenine. It carries out the reaction S-methyl-5'-thioadenosine + H2O = 5-(methylsulfanyl)-D-ribose + adenine. It catalyses the reaction 5'-deoxyadenosine + H2O = 5-deoxy-D-ribose + adenine. It participates in amino-acid biosynthesis; L-methionine biosynthesis via salvage pathway; S-methyl-5-thio-alpha-D-ribose 1-phosphate from S-methyl-5'-thioadenosine (hydrolase route): step 1/2. Functionally, catalyzes the irreversible cleavage of the glycosidic bond in both 5'-methylthioadenosine (MTA) and S-adenosylhomocysteine (SAH/AdoHcy) to adenine and the corresponding thioribose, 5'-methylthioribose and S-ribosylhomocysteine, respectively. Also cleaves 5'-deoxyadenosine, a toxic by-product of radical S-adenosylmethionine (SAM) enzymes, into 5-deoxyribose and adenine. This chain is 5'-methylthioadenosine/S-adenosylhomocysteine nucleosidase, found in Shewanella sp. (strain W3-18-1).